Here is a 688-residue protein sequence, read N- to C-terminus: Polyribonucleotide nucleotidyltransferase (688 aa).

Aspartate 484 and aspartate 490 together coordinate Mg(2+). Positions proline 550–isoleucine 609 constitute a KH domain. The S1 motif domain maps to aspartate 626 to alanine 688.

Belongs to the polyribonucleotide nucleotidyltransferase family. Mg(2+) is required as a cofactor.

The protein resides in the cytoplasm. It catalyses the reaction RNA(n+1) + phosphate = RNA(n) + a ribonucleoside 5'-diphosphate. In terms of biological role, involved in mRNA degradation. Catalyzes the phosphorolysis of single-stranded polyribonucleotides processively in the 3'- to 5'-direction. This is Polyribonucleotide nucleotidyltransferase from Helicobacter pylori (strain G27).